A 474-amino-acid polypeptide reads, in one-letter code: Probable dipeptidase B (474 aa).

Cysteine 11 is an active-site residue.

The protein belongs to the peptidase C69 family.

It carries out the reaction an L-aminoacyl-L-amino acid + H2O = 2 an L-alpha-amino acid. The chain is Probable dipeptidase B (pepDB) from Lactococcus lactis subsp. lactis (strain IL1403) (Streptococcus lactis).